The primary structure comprises 367 residues: NAD(P)H-quinone oxidoreductase subunit 1, chloroplastic (367 aa).

Helical transmembrane passes span 30–50 (LFPI…IVWL), 98–118 (FSIG…VIPF), 127–147 (LSIG…GLLM), 164–184 (AAAQ…SISL), 273–293 (LFVT…IFVP), 304–324 (VFGT…FLFI), and 340–360 (LLNL…LLTT).

Belongs to the complex I subunit 1 family. As to quaternary structure, NDH is composed of at least 16 different subunits, 5 of which are encoded in the nucleus.

Its subcellular location is the plastid. The protein resides in the chloroplast thylakoid membrane. The enzyme catalyses a plastoquinone + NADH + (n+1) H(+)(in) = a plastoquinol + NAD(+) + n H(+)(out). It carries out the reaction a plastoquinone + NADPH + (n+1) H(+)(in) = a plastoquinol + NADP(+) + n H(+)(out). Its function is as follows. NDH shuttles electrons from NAD(P)H:plastoquinone, via FMN and iron-sulfur (Fe-S) centers, to quinones in the photosynthetic chain and possibly in a chloroplast respiratory chain. The immediate electron acceptor for the enzyme in this species is believed to be plastoquinone. Couples the redox reaction to proton translocation, and thus conserves the redox energy in a proton gradient. In Nicotiana tabacum (Common tobacco), this protein is NAD(P)H-quinone oxidoreductase subunit 1, chloroplastic.